Here is a 130-residue protein sequence, read N- to C-terminus: Small ribosomal subunit protein uS11 (130 aa).

It belongs to the universal ribosomal protein uS11 family. Part of the 30S ribosomal subunit. Interacts with proteins S7 and S18. Binds to IF-3.

Its function is as follows. Located on the platform of the 30S subunit, it bridges several disparate RNA helices of the 16S rRNA. Forms part of the Shine-Dalgarno cleft in the 70S ribosome. In Helicobacter hepaticus (strain ATCC 51449 / 3B1), this protein is Small ribosomal subunit protein uS11.